Here is a 736-residue protein sequence, read N- to C-terminus: Catalase-peroxidase (736 aa).

Residues 1-10 are compositionally biased toward basic and acidic residues; that stretch reads MDAKTDDKGA. Positions 1–26 are disordered; the sequence is MDAKTDDKGAGKCPFSGGSHGHRNRD. A cross-link (tryptophyl-tyrosyl-methioninium (Trp-Tyr) (with M-244)) is located at residues 96–218; that stretch reads WHSAGTYRIT…LGAVQMGLIY (123 aa). The Proton acceptor role is filled by histidine 97. Residues 218–244 constitute a cross-link (tryptophyl-tyrosyl-methioninium (Tyr-Met) (with W-96)); it reads YVNPEGPNGNPDPVAAAKDIRETFARM. Histidine 259 is a binding site for heme b.

This sequence belongs to the peroxidase family. Peroxidase/catalase subfamily. Homodimer or homotetramer. It depends on heme b as a cofactor. Formation of the three residue Trp-Tyr-Met cross-link is important for the catalase, but not the peroxidase activity of the enzyme.

The catalysed reaction is H2O2 + AH2 = A + 2 H2O. It carries out the reaction 2 H2O2 = O2 + 2 H2O. Its function is as follows. Bifunctional enzyme with both catalase and broad-spectrum peroxidase activity. The chain is Catalase-peroxidase from Rhodopseudomonas palustris (strain ATCC BAA-98 / CGA009).